Consider the following 729-residue polypeptide: Golgin subfamily A member 5 (729 aa).

S2 carries the N-acetylserine modification. The Cytoplasmic segment spans residues 2 to 696; the sequence is SWFADLAGRA…IFLRRYPIAR (695 aa). R27 and R89 each carry dimethylated arginine. Disordered regions lie at residues 89–222 and 626–645; these read RTVG…SQEL and SASSGPNSGSAINMSGVDSG. S116 is modified (phosphoserine). The span at 134 to 146 shows a compositional bias: basic and acidic residues; that stretch reads PTGRVEVKKEKGR. The segment covering 148–167 has biased composition (low complexity); it reads PVSPSSPSGVSSVNTSVTTT. 2 stretches are compositionally biased toward polar residues: residues 175–186 and 626–638; these read GSQSPGVNSSDS and SASSGPNSGSAIN. Positions 215–629 form a coiled coil; sequence GSSRSQELSN…LEQQVHSASS (415 aa). A helical; Anchor for type IV membrane protein membrane pass occupies residues 697–717; the sequence is VFVIIYMALLHLWVMIVLLTY. At 718–729 the chain is on the lumenal side; the sequence is SPEMHHDQPYGK.

In terms of assembly, homodimer. Interacts with RAB1A that has been activated by GTP-binding. Interacts with isoform CASP of CUX1. Post-translationally, highly phosphorylated during mitosis. Phosphorylation is barely detectable during interphase.

Its subcellular location is the golgi apparatus membrane. In terms of biological role, involved in maintaining Golgi structure. Stimulates the formation of Golgi stacks and ribbons. Involved in intra-Golgi retrograde transport. The protein is Golgin subfamily A member 5 (Golga5) of Mus musculus (Mouse).